A 398-amino-acid chain; its full sequence is Mitogen-activated protein kinase 1 (398 aa).

The interval 1 to 26 is disordered; the sequence is MDAGAQPPDTEMAEAGGGQQPPAAAA. Residues 67 to 352 form the Protein kinase domain; the sequence is KPPILPIGKG…VEGALAHPYL (286 aa). ATP is bound by residues 73–81 and Lys-96; that span reads IGKGAYGIV. Catalysis depends on Asp-193, which acts as the Proton acceptor. Thr-225 carries the phosphothreonine modification. Residues 225-227 carry the TXY motif; that stretch reads TEY. Tyr-227 bears the Phosphotyrosine mark.

This sequence belongs to the protein kinase superfamily. CMGC Ser/Thr protein kinase family. MAP kinase subfamily. As to quaternary structure, may interact with RAC1. Post-translationally, dually phosphorylated on Thr-225 and Tyr-227, which activates the enzyme.

The enzyme catalyses L-seryl-[protein] + ATP = O-phospho-L-seryl-[protein] + ADP + H(+). The catalysed reaction is L-threonyl-[protein] + ATP = O-phospho-L-threonyl-[protein] + ADP + H(+). With respect to regulation, activated by threonine and tyrosine phosphorylation. Activated in response to sphingolipid elicitor (SE). Its function is as follows. Involved in sphingolipid elicitor (SE)-dependent defense signaling pathway. Acts downstream of heterotrimeric G protein alpha subunit and small GTPase RAC1. May regulate the expression of various genes involved in biotic and abiotic stress response. Involved in an abscisic acid signaling pathway that regulates the activities of antioxidant enzymes and the production of hydrogen peroxide. Acts downstream of CCAMK. The sequence is that of Mitogen-activated protein kinase 1 (MPK1) from Oryza sativa subsp. japonica (Rice).